The primary structure comprises 201 residues: Lipoprotein signal peptidase (201 aa).

3 helical membrane passes run 33 to 53 (LLLS…VLAV), 86 to 106 (GYTW…FWMG), and 110 to 130 (VSSW…GNLV). Catalysis depends on residues aspartate 146 and aspartate 160. A helical transmembrane segment spans residues 158-178 (VADPSVVVGAILLVVLSIFGF).

This sequence belongs to the peptidase A8 family.

It is found in the cell membrane. The enzyme catalyses Release of signal peptides from bacterial membrane prolipoproteins. Hydrolyzes -Xaa-Yaa-Zaa-|-(S,diacylglyceryl)Cys-, in which Xaa is hydrophobic (preferably Leu), and Yaa (Ala or Ser) and Zaa (Gly or Ala) have small, neutral side chains.. It functions in the pathway protein modification; lipoprotein biosynthesis (signal peptide cleavage). In terms of biological role, this protein specifically catalyzes the removal of signal peptides from prolipoproteins. This is Lipoprotein signal peptidase from Mycobacterium leprae (strain Br4923).